Consider the following 209-residue polypeptide: ATP synthase subunit O, mitochondrial (209 aa).

The protein belongs to the ATPase delta chain family. In terms of assembly, F-type ATPases have 2 components, CF(1) - the catalytic core - and CF(0) - the membrane proton channel. CF(1) has five subunits: alpha(3), beta(3), gamma(1), delta(1), epsilon(1). CF(0) has three main subunits: a, b and c.

It is found in the mitochondrion. The protein localises to the mitochondrion inner membrane. Its function is as follows. Mitochondrial membrane ATP synthase (F(1)F(0) ATP synthase or Complex V) produces ATP from ADP in the presence of a proton gradient across the membrane which is generated by electron transport complexes of the respiratory chain. F-type ATPases consist of two structural domains, F(1) - containing the extramembraneous catalytic core and F(0) - containing the membrane proton channel, linked together by a central stalk and a peripheral stalk. During catalysis, ATP synthesis in the catalytic domain of F(1) is coupled via a rotary mechanism of the central stalk subunits to proton translocation. Part of the complex F(0) domain and the peripheric stalk, which acts as a stator to hold the catalytic alpha(3)beta(3) subcomplex and subunit a/ATP6 static relative to the rotary elements. The chain is ATP synthase subunit O, mitochondrial from Drosophila melanogaster (Fruit fly).